Reading from the N-terminus, the 249-residue chain is Oxidoreductase asL5 (249 aa).

NADP(+) contacts are provided by isoleucine 21, lysine 45, asparagine 90, tyrosine 155, lysine 159, isoleucine 188, and threonine 190. Tyrosine 155 functions as the Proton acceptor in the catalytic mechanism. Lysine 159 serves as the catalytic Lowers pKa of active site Tyr.

Belongs to the short-chain dehydrogenases/reductases (SDR) family.

Oxidoreductase; part of the gene cluster that mediates the biosynthesis of xenovulene A, an unusual meroterpenoid that has potent inhibitory effects on the human gamma-aminobutyrate A (GABAA) benzodiazepine receptor. The first step of xenovulene A biosynthesis is the biosynthesis of 3-methylorcinaldehyde performed by the non-reducing polyketide synthase aspks1. The salicylate hydroxylase asL1 then catalyzes the oxidative dearomatization of 3-methylorcinaldehyde to yield a dearomatized hydroxycyclohexadione. The 2-oxoglutarate-dependent dioxygenase asL3 further catalyzes the oxidative ring expansion to provide the first tropolone metabolite. The cytochrome P450 monooxygenase asR2 allows the synthesis of tropolone hemiacetal. In parallel, a previously unrecognised class of terpene cyclase, asR6, produces alpha-humulene from farnesylpyrophosphate (FPP). The putative Diels-Alderase asR5 probably catalyzes the formation of the tropolone-humulene skeleton by linking humulene and the polyketide moiety. Oxidative-ring contractions catalyzed by asL4 and asL6 then processively remove carbon atoms from the polyketide to yield xenovulene A. The sequence is that of Oxidoreductase asL5 from Sarocladium schorii (Acremonium strictum (strain IMI 501407)).